Consider the following 441-residue polypeptide: Velvet complex subunit B (441 aa).

The 173-residue stretch at 1 to 173 (MSTLGQGDFE…SDQGVRLRLR (173 aa)) folds into the Velvet domain. Disordered regions lie at residues 200–220 (GYLPHDANHDLSPNGHSPHHL), 234–295 (RSRS…ETDT), and 341–396 (MPSP…PSYA). Composition is skewed to low complexity over residues 272-283 (DGASPDSPHPSS) and 361-375 (PAGAPGSASSAFSPG).

Belongs to the velvet family. VelB subfamily. In terms of assembly, component of the heterotrimeric velvet complex composed of laeA, veA and velB; VeA acting as a bridging protein between laeA and velB.

It is found in the nucleus. The protein resides in the cytoplasm. In terms of biological role, component of the velvet transcription factor complex that controls sexual/asexual developmental ratio in response to light, promoting sexual development in the darkness while stimulating asexual sporulation under illumination. The velvet complex acts as a global regulator for secondary metabolite gene expression and is required for the production of chaetoglobosin A. The chain is Velvet complex subunit B from Chaetomium globosum (strain ATCC 6205 / CBS 148.51 / DSM 1962 / NBRC 6347 / NRRL 1970) (Soil fungus).